The following is a 292-amino-acid chain: MTDMPSVTTPALDRYAVFGNPIGHSKSPIIHGQFASLTLQPLSYEAILAPIDGFEASLRAFFQAGGKGANVTVPFKEQAFALCDSLSAEATLAGAVNTLSLLADGTLYGDNTDGLGLVADLLRHLGSLQHKRVLLVGAGGAARGCILPLLKAEVGQLVITNRTQSKAQALVEIFSQVQQGRYSDKLQAMSMPELSGEFDLVINSTSASLAGELPPLPQSIIGNKTACYDMMYGAKPTAFNQWAVQQGAAQVIDGLGMLVGQAAKSFALWRGVEPDTSGVLKLLRDKLQADAQ.

Shikimate is bound by residues 25–27 and Thr72; that span reads SKS. The active-site Proton acceptor is the Lys76. Positions 97 and 113 each coordinate shikimate. NADP(+) contacts are provided by residues 137–141, 161–166, and Met230; these read GAGGA and NRTQSK. Residue Tyr232 participates in shikimate binding. Residue Gly254 coordinates NADP(+).

It belongs to the shikimate dehydrogenase family. Homodimer.

The catalysed reaction is shikimate + NADP(+) = 3-dehydroshikimate + NADPH + H(+). It participates in metabolic intermediate biosynthesis; chorismate biosynthesis; chorismate from D-erythrose 4-phosphate and phosphoenolpyruvate: step 4/7. In terms of biological role, involved in the biosynthesis of the chorismate, which leads to the biosynthesis of aromatic amino acids. Catalyzes the reversible NADPH linked reduction of 3-dehydroshikimate (DHSA) to yield shikimate (SA). The protein is Shikimate dehydrogenase (NADP(+)) of Shewanella sp. (strain MR-4).